Consider the following 106-residue polypeptide: Large ribosomal subunit protein bL21 (106 aa).

It belongs to the bacterial ribosomal protein bL21 family. Part of the 50S ribosomal subunit. Contacts protein L20.

This protein binds to 23S rRNA in the presence of protein L20. This chain is Large ribosomal subunit protein bL21, found in Thermosipho africanus (strain TCF52B).